The chain runs to 145 residues: Hemoglobin subunit beta-2 (145 aa).

In terms of domain architecture, Globin spans 2 to 145 (HLTDQEIKYI…VADAVGKGYH (144 aa)). The heme b site is built by His-63 and His-91.

Belongs to the globin family. As to expression, red blood cells.

The sequence is that of Hemoglobin subunit beta-2 from Telmatobius peruvianus (Andean frog).